Here is an 88-residue protein sequence, read N- to C-terminus: Bombyxin B-8 (88 aa).

The first 18 residues, 1–18 (MKTSVIFVLIVLNLMWSG), serve as a signal peptide directing secretion. Disulfide bonds link Cys-28/Cys-74, Cys-40/Cys-87, and Cys-73/Cys-78. A propeptide spans 47 to 65 (GGAQYAPYFWQKAYLGSRG) (c peptide like).

It belongs to the insulin family. Heterodimer of a B chain and an A chain linked by two disulfide bonds.

Its subcellular location is the secreted. Functionally, brain peptide responsible for activation of prothoracic glands to produce ecdysone in insects. The sequence is that of Bombyxin B-8 (BBXB8) from Bombyx mori (Silk moth).